A 504-amino-acid polypeptide reads, in one-letter code: uncharacterized protein (504 aa).

The interval 36–60 (TAFRMEKEQRLPSQNKPPRGRRRPD) is disordered. In terms of domain architecture, Integrase catalytic spans 125–309 (QTHEPGRLGL…RPHLQVLPER (185 aa)).

This is an uncharacterized protein from Sinorhizobium fredii (strain NBRC 101917 / NGR234).